Reading from the N-terminus, the 465-residue chain is Tubulin gamma chain (465 aa).

144–150 contributes to the GTP binding site; that stretch reads AGGTGSG.

This sequence belongs to the tubulin family.

It is found in the cytoplasm. It localises to the cytoskeleton. Its subcellular location is the microtubule organizing center. The protein resides in the spindle pole body. In terms of biological role, tubulin is the major constituent of microtubules. The gamma chain is found at microtubule organizing centers (MTOC) such as the spindle poles or the centrosome, suggesting that it is involved in the minus-end nucleation of microtubule assembly. The polypeptide is Tubulin gamma chain (TUB4) (Candida glabrata (strain ATCC 2001 / BCRC 20586 / JCM 3761 / NBRC 0622 / NRRL Y-65 / CBS 138) (Yeast)).